The sequence spans 603 residues: Probable L-gulonolactone oxidase 6 (603 aa).

Positions 1 to 35 (MAFTSSPSYGSLNAAFWRTIFVVHCISTLVFTTIS) are cleaved as a signal peptide. Residues 64–246 (STCRAANVAY…SQVTLKLQPM (183 aa)) form the FAD-binding PCMH-type domain.

This sequence belongs to the oxygen-dependent FAD-linked oxidoreductase family. FAD is required as a cofactor.

The catalysed reaction is L-gulono-1,4-lactone + O2 = L-ascorbate + H2O2 + H(+). Its pathway is cofactor biosynthesis; L-ascorbate biosynthesis. In terms of biological role, may be involved in the biosynthesis of ascorbic acid. This chain is Probable L-gulonolactone oxidase 6, found in Arabidopsis thaliana (Mouse-ear cress).